A 536-amino-acid chain; its full sequence is CTP synthase (536 aa).

The amidoligase domain stretch occupies residues 1 to 267; it reads MSKFVFVTGG…CKETLKYLEL (267 aa). CTP is bound at residue Ser-13. Position 13 (Ser-13) interacts with UTP. Residues 14-19 and Asp-71 each bind ATP; that span reads SIGKGI. Mg(2+) contacts are provided by Asp-71 and Glu-141. Residues 148 to 150, 188 to 193, and Lys-224 contribute to the CTP site; these read DIE and KTKPTQ. Residues 188–193 and Lys-224 contribute to the UTP site; that span reads KTKPTQ. Residues 292-534 enclose the Glutamine amidotransferase type-1 domain; sequence KVALVGKYIE…IKSSQENLTQ (243 aa). Residue Gly-354 participates in L-glutamine binding. The active-site Nucleophile; for glutamine hydrolysis is the Cys-381. L-glutamine contacts are provided by residues 382–385, Glu-405, and Arg-462; that span reads LGMQ. Active-site residues include His-507 and Glu-509.

This sequence belongs to the CTP synthase family. Homotetramer.

It catalyses the reaction UTP + L-glutamine + ATP + H2O = CTP + L-glutamate + ADP + phosphate + 2 H(+). The enzyme catalyses L-glutamine + H2O = L-glutamate + NH4(+). It carries out the reaction UTP + NH4(+) + ATP = CTP + ADP + phosphate + 2 H(+). It participates in pyrimidine metabolism; CTP biosynthesis via de novo pathway; CTP from UDP: step 2/2. With respect to regulation, allosterically activated by GTP, when glutamine is the substrate; GTP has no effect on the reaction when ammonia is the substrate. The allosteric effector GTP functions by stabilizing the protein conformation that binds the tetrahedral intermediate(s) formed during glutamine hydrolysis. Inhibited by the product CTP, via allosteric rather than competitive inhibition. In terms of biological role, catalyzes the ATP-dependent amination of UTP to CTP with either L-glutamine or ammonia as the source of nitrogen. Regulates intracellular CTP levels through interactions with the four ribonucleotide triphosphates. This chain is CTP synthase, found in Prochlorococcus marinus (strain MIT 9312).